The following is a 320-amino-acid chain: Ubiquitin-like domain-containing CTD phosphatase 1 (320 aa).

Residues 6–77 (VVVIVKWSGK…LKPNFKLMMV (72 aa)) form the Ubiquitin-like domain. Residues 136 to 296 (PREGKKLLVL…LKLSDYLRKI (161 aa)) enclose the FCP1 homology domain. Positions 146, 148, and 255 each coordinate Mg(2+).

Mg(2+) serves as cofactor.

The protein resides in the nucleus. The catalysed reaction is O-phospho-L-seryl-[protein] + H2O = L-seryl-[protein] + phosphate. The enzyme catalyses O-phospho-L-threonyl-[protein] + H2O = L-threonyl-[protein] + phosphate. In terms of biological role, dephosphorylates 26S nuclear proteasomes, thereby decreasing their proteolytic activity. Recruited to the 19S regulatory particle of the 26S proteasome where it dephosphorylates 19S component Rpt1 which impairs Rpt1 ATPase activity and disrupts 26S proteasome assembly. This Drosophila melanogaster (Fruit fly) protein is Ubiquitin-like domain-containing CTD phosphatase 1.